The following is a 314-amino-acid chain: DNA-directed RNA polymerase subunit alpha (314 aa).

The tract at residues M1 to S227 is alpha N-terminal domain (alpha-NTD). The segment at V241 to N314 is alpha C-terminal domain (alpha-CTD).

The protein belongs to the RNA polymerase alpha chain family. In terms of assembly, homodimer. The RNAP catalytic core consists of 2 alpha, 1 beta, 1 beta' and 1 omega subunit. When a sigma factor is associated with the core the holoenzyme is formed, which can initiate transcription.

The catalysed reaction is RNA(n) + a ribonucleoside 5'-triphosphate = RNA(n+1) + diphosphate. Functionally, DNA-dependent RNA polymerase catalyzes the transcription of DNA into RNA using the four ribonucleoside triphosphates as substrates. This Oenococcus oeni (strain ATCC BAA-331 / PSU-1) protein is DNA-directed RNA polymerase subunit alpha.